The primary structure comprises 435 residues: Eukaryotic peptide chain release factor subunit 1-3 (435 aa).

Ala-2 is subject to N-acetylalanine.

Belongs to the eukaryotic release factor 1 family. Heterodimer of two subunits, one of which binds GTP.

The protein resides in the cytoplasm. Directs the termination of nascent peptide synthesis (translation) in response to the termination codons UAA, UAG and UGA. Modulates plant growth and development. This chain is Eukaryotic peptide chain release factor subunit 1-3, found in Brassica oleracea var. botrytis (Cauliflower).